Here is a 184-residue protein sequence, read N- to C-terminus: Photosystem I assembly protein Ycf4 (184 aa).

The next 2 membrane-spanning stretches (helical) occupy residues 22–42 (FFWACILFLGSLGFLLVGTSS) and 57–77 (ILFFPQGIVMSFYGIAGLFIS).

Belongs to the Ycf4 family.

The protein resides in the plastid. The protein localises to the chloroplast thylakoid membrane. Seems to be required for the assembly of the photosystem I complex. The chain is Photosystem I assembly protein Ycf4 from Nandina domestica (Heavenly bamboo).